We begin with the raw amino-acid sequence, 856 residues long: Alginate lyase 7 (856 aa).

PbH1 repeat units lie at residues 133 to 155 (DYNVTVERVEIREVSRYAFDPHE), 157 to 179 (TINLTIRDSVAHDNGKDGFVADF), 180 to 202 (QIGAVFENNVSYNNGRHGFNIVT), 204 to 226 (SHDIVFTNNVAYGNGANGLVVQR), 234 to 256 (VYNVEIEGGSFHDNGQEGVLIKM), 257 to 279 (STDVTLQGAEIYGNGYAGVRVQG), 280 to 304 (VEDVRILDNYIHDNAQSKANAEVIV), and 320 to 342 (TQNVTVKGNTIVGSANSTYGIQE). 9 Hemolysin-type calcium-binding repeats span residues 387–402 (GSTGNDLLTGTPIADL), 404–421 (VGGSGNDTLSGDAGNDVL), 422–439 (EGGAGSDRLTGGEGADIF), 538–549 (GTEGDDSLTGNA), 554–563 (LDGGSGNDSL), 565–581 (GGLGNDVLRGGAGDDIL), 582–599 (NGGLGRDQLSGGEGADIF), 715–731 (GGAGRDILNGGAGDDIL), and 733–749 (GGSERDTLTGGSGADVF).

This sequence belongs to the D-mannuronate C5-epimerase family. Requires Ca(2+) as cofactor.

It is found in the secreted. The catalysed reaction is Eliminative cleavage of alginate to give oligosaccharides with 4-deoxy-alpha-L-erythro-hex-4-enuronosyl groups at their non-reducing ends and beta-D-mannuronate at their reducing end.. The enzyme catalyses [(1-&gt;4)-beta-D-mannuronosyl](n) = [alginate](n). It functions in the pathway glycan biosynthesis; alginate biosynthesis. Its activity is regulated as follows. Inhibited by zinc. Converts beta-D-mannuronic acid (M) to alpha-L-guluronic acid (G). Has both epimerase and lyase activities. Contributes to abortive encystment by degrading the coat from inside the cyst. Important for cyst germination. The chain is Alginate lyase 7 from Azotobacter vinelandii.